The following is a 949-amino-acid chain: Glycine dehydrogenase (decarboxylating) (949 aa).

An N6-(pyridoxal phosphate)lysine modification is found at Lys-697.

Belongs to the GcvP family. As to quaternary structure, the glycine cleavage system is composed of four proteins: P, T, L and H. The cofactor is pyridoxal 5'-phosphate.

It catalyses the reaction N(6)-[(R)-lipoyl]-L-lysyl-[glycine-cleavage complex H protein] + glycine + H(+) = N(6)-[(R)-S(8)-aminomethyldihydrolipoyl]-L-lysyl-[glycine-cleavage complex H protein] + CO2. Its function is as follows. The glycine cleavage system catalyzes the degradation of glycine. The P protein binds the alpha-amino group of glycine through its pyridoxal phosphate cofactor; CO(2) is released and the remaining methylamine moiety is then transferred to the lipoamide cofactor of the H protein. The polypeptide is Glycine dehydrogenase (decarboxylating) (Deinococcus radiodurans (strain ATCC 13939 / DSM 20539 / JCM 16871 / CCUG 27074 / LMG 4051 / NBRC 15346 / NCIMB 9279 / VKM B-1422 / R1)).